Consider the following 164-residue polypeptide: Glycine cleavage system H protein, mitochondrial (164 aa).

The N-terminal 34 residues, 1–34, are a transit peptide targeting the mitochondrion; that stretch reads MALRLWASSAANALKISCSGATRAAPAYSISRYF. Residues 56-138 form the Lipoyl-binding domain; it reads VATIGITDHA…YEDGWMIKVK (83 aa). Residue Lys-97 is modified to N6-lipoyllysine.

It belongs to the GcvH family. In terms of assembly, the glycine cleavage system is composed of four proteins: P, T, L and H. Requires (R)-lipoate as cofactor.

It is found in the mitochondrion. Functionally, the glycine cleavage system catalyzes the degradation of glycine. The H protein shuttles the methylamine group of glycine from the P protein to the T protein. This is Glycine cleavage system H protein, mitochondrial (GDCSH) from Oryza sativa subsp. indica (Rice).